A 160-amino-acid polypeptide reads, in one-letter code: Putative pre-16S rRNA nuclease (160 aa).

This sequence belongs to the YqgF nuclease family.

The protein resides in the cytoplasm. Its function is as follows. Could be a nuclease involved in processing of the 5'-end of pre-16S rRNA. The protein is Putative pre-16S rRNA nuclease of Rhodopseudomonas palustris (strain HaA2).